Here is a 641-residue protein sequence, read N- to C-terminus: Chaperone protein DnaK (641 aa).

Thr200 is subject to Phosphothreonine; by autocatalysis. Residues 606-623 (AEQGGNADAASGNAQASK) are compositionally biased toward low complexity. A disordered region spans residues 606 to 627 (AEQGGNADAASGNAQASKAADD).

It belongs to the heat shock protein 70 family.

In terms of biological role, acts as a chaperone. The chain is Chaperone protein DnaK from Xanthomonas euvesicatoria pv. vesicatoria (strain 85-10) (Xanthomonas campestris pv. vesicatoria).